We begin with the raw amino-acid sequence, 306 residues long: tRNA dimethylallyltransferase (306 aa).

Residue 2 to 9 (GPTASGKT) participates in ATP binding. 4 to 9 (TASGKT) is a binding site for substrate. Interaction with substrate tRNA regions lie at residues 27–30 (DSVQ) and 152–156 (QRIVR).

Belongs to the IPP transferase family. Monomer. The cofactor is Mg(2+).

It carries out the reaction adenosine(37) in tRNA + dimethylallyl diphosphate = N(6)-dimethylallyladenosine(37) in tRNA + diphosphate. Functionally, catalyzes the transfer of a dimethylallyl group onto the adenine at position 37 in tRNAs that read codons beginning with uridine, leading to the formation of N6-(dimethylallyl)adenosine (i(6)A). The chain is tRNA dimethylallyltransferase from Magnetococcus marinus (strain ATCC BAA-1437 / JCM 17883 / MC-1).